Reading from the N-terminus, the 366-residue chain is Aminomethyltransferase (366 aa).

Belongs to the GcvT family. As to quaternary structure, the glycine cleavage system is composed of four proteins: P, T, L and H.

It catalyses the reaction N(6)-[(R)-S(8)-aminomethyldihydrolipoyl]-L-lysyl-[protein] + (6S)-5,6,7,8-tetrahydrofolate = N(6)-[(R)-dihydrolipoyl]-L-lysyl-[protein] + (6R)-5,10-methylene-5,6,7,8-tetrahydrofolate + NH4(+). In terms of biological role, the glycine cleavage system catalyzes the degradation of glycine. The sequence is that of Aminomethyltransferase from Bordetella bronchiseptica (strain ATCC BAA-588 / NCTC 13252 / RB50) (Alcaligenes bronchisepticus).